Reading from the N-terminus, the 853-residue chain is DNA mismatch repair protein MutS (853 aa).

614 to 621 (GPNMGGKS) provides a ligand contact to ATP.

It belongs to the DNA mismatch repair MutS family.

Its function is as follows. This protein is involved in the repair of mismatches in DNA. It is possible that it carries out the mismatch recognition step. This protein has a weak ATPase activity. This is DNA mismatch repair protein MutS from Shigella dysenteriae serotype 1 (strain Sd197).